The following is a 311-amino-acid chain: Malate dehydrogenase (311 aa).

NAD(+)-binding positions include 7-13 (GAAGGIG) and Asp-34. 2 residues coordinate substrate: Arg-81 and Arg-87. Residues Asn-94 and 117–119 (ITN) contribute to the NAD(+) site. 2 residues coordinate substrate: Asn-119 and Arg-153. His-177 functions as the Proton acceptor in the catalytic mechanism. Residue Met-227 participates in NAD(+) binding.

This sequence belongs to the LDH/MDH superfamily. MDH type 1 family. As to quaternary structure, homodimer.

The enzyme catalyses (S)-malate + NAD(+) = oxaloacetate + NADH + H(+). In terms of biological role, catalyzes the reversible oxidation of malate to oxaloacetate. The polypeptide is Malate dehydrogenase (Shewanella woodyi (strain ATCC 51908 / MS32)).